Consider the following 46-residue polypeptide: U-myrmeciitoxin(01)-Mg6a (46 aa).

A signal peptide spans 1 to 20; that stretch reads MNLKTFCFFLLGIFVTLTVT. Positions 21–33 are excised as a propeptide; the sequence is VIPIANADAEADT.

In terms of processing, contains 1 disulfide bond. As to expression, expressed by the venom gland.

The protein localises to the secreted. This Myrmecia gulosa (Red bulldog ant) protein is U-myrmeciitoxin(01)-Mg6a.